We begin with the raw amino-acid sequence, 233 residues long: Coproporphyrinogen-III oxidase 2, chloroplastic (233 aa).

Residues 1–48 (MASHSSTLFTSPSSFILFSSHRLKSSPNYFTYHFPRSVKRPHFDLRCS) constitute a chloroplast transit peptide. S174 contacts substrate. Residue H188 is the Proton donor of the active site.

This sequence belongs to the aerobic coproporphyrinogen-III oxidase family. In terms of assembly, homodimer.

It localises to the plastid. The protein resides in the chloroplast. The enzyme catalyses coproporphyrinogen III + O2 + 2 H(+) = protoporphyrinogen IX + 2 CO2 + 2 H2O. It functions in the pathway porphyrin-containing compound metabolism; protoporphyrin-IX biosynthesis; protoporphyrinogen-IX from coproporphyrinogen-III (O2 route): step 1/1. It participates in porphyrin-containing compound metabolism; chlorophyll biosynthesis. Key enzyme in heme biosynthesis. Catalyzes the oxidative decarboxylation of propionic acid side chains of rings A and B of coproporphyrinogen III. The sequence is that of Coproporphyrinogen-III oxidase 2, chloroplastic (CPX2) from Arabidopsis thaliana (Mouse-ear cress).